Reading from the N-terminus, the 677-residue chain is Envelope glycoprotein (677 aa).

A signal peptide spans 1–33 (MGSGYQLLQLPRERFRKTSFLVWVIILFQRAIS). Over 34–651 (MPLGIVTNST…DLNLWTGWRQ (618 aa)) the chain is Extracellular. The N-linked (GlcNAc...) asparagine; by host glycan is linked to N41. Intrachain disulfides connect C54–C610, C109–C136, C122–C148, C512–C557, and C602–C609. The tract at residues 55-202 (RDKLSSTSQL…HFWKATPAHE (148 aa)) is receptor-binding. Residues N205, N239, N258, N269, N297, N317, N318, N339, N406, N420, N435, and N463 are each glycosylated (N-linked (GlcNAc...) asparagine; by host). Residues 306-486 (NLHFQILSTH…PSQPGFTINT (181 aa)) form a mucin-like region region. Over residues 315–326 (HTNNSSDQSPAG) the composition is skewed to polar residues. Disordered stretches follow at residues 315–349 (HTNN…TDSP), 370–482 (NGET…QPGF), and 489–508 (KVAD…RQNT). 2 stretches are compositionally biased toward polar residues: residues 370 to 421 (NGET…ASNE) and 429 to 472 (NPIQ…TSPG). The fusion peptide stretch occupies residues 525–540 (GAAVGLAWIPYFGPAA). The stretch at 555 to 596 (LICGLRQLANETTQALQLFLRATTELRTYSLLNRKAIDFLLQ) forms a coiled coil. N-linked (GlcNAc...) asparagine; by host glycosylation is present at N564. Residues 616 to 635 (WTKNITDEINQIKHDFIDNP) are a coiled coil. N619 carries N-linked (GlcNAc...) asparagine; by host glycosylation. The helical transmembrane segment at 652 to 672 (WIPAGIGIIGVIIAIIALLCI) threads the bilayer. 2 S-palmitoyl cysteine; by host lipidation sites follow: C671 and C673. Topologically, residues 673–677 (CKILC) are cytoplasmic.

It belongs to the filoviruses glycoprotein family. As to quaternary structure, homotrimer; each monomer consists of a GP1 and a GP2 subunit linked by disulfide bonds. The resulting peplomers (GP1,2) protrude from the virus surface as spikes. Interacts with host integrin alpha-V/ITGAV. Interacts with host CLEC10A. Binds also to host CD209 and CLEC4M/DC-SIGN(R). Interacts with host FOLR1. Interacts with BST2; this interaction inhibits the antiviral effect of BST2 and this allows viral release from infected cells. Interacts with host FCN1; this interaction enhances viral entry. Interacts with host TLR4; this interaction induces cell death in T-lymphocytes or proinflammatory cytokines and SOCS1 production in monocytes. Interacts with host entry receptor NPC1. In terms of assembly, GP1 and GP2delta are part of GP1,2delta soluble complexes released by ectodomain shedding. The signal peptide region modulates GP's high mannose glycosylation, thereby determining the efficiency of the interactions with DC-SIGN(R). In terms of processing, N-glycosylated. Post-translationally, O-glycosylated in the mucin-like region. Palmitoylation of GP2 is not required for its function. In terms of processing, specific enzymatic cleavages in vivo yield mature proteins. The precursor is processed into GP1 and GP2 by host cell furin in the trans Golgi, and maybe by other host proteases, to yield the mature GP1 and GP2 proteins. The cleavage site corresponds to the furin optimal cleavage sequence [KR]-X-[KR]-R. This cleavage does not seem to be required for function. After the internalization of the virus into cell endosomes, GP1 C-terminus is removed by the endosomal proteases cathepsin B, cathepsin L, or both, leaving a 19-kDa N-terminal fragment which is further digested by cathepsin B. Proteolytic processing of GP1,2 by host ADAM17 can remove the transmembrane anchor of GP2 and leads to shedding of complexes consisting in GP1 and truncated GP2 (GP1,2delta).

It localises to the virion membrane. Its subcellular location is the host cell membrane. The protein resides in the secreted. Functionally, trimeric GP1,2 complexes form the virion surface spikes and mediate the viral entry processes, with GP1 acting as the receptor-binding subunit and GP2 as the membrane fusion subunit. At later times of infection, down-regulates the expression of various host cell surface molecules that are essential for immune surveillance and cell adhesion. Down-modulates several integrins including ITGA1, ITGA2, ITGA3, ITGA4, ITGA5, ITGA6, ITGAV and ITGB1. This decrease in cell adhesion molecules may lead to cell detachment, contributing to the disruption of blood vessel integrity and hemorrhages developed during infection (cytotoxicity). Interacts with host TLR4 and thereby stimulates the differentiation and activation of monocytes leading to bystander death of T-lymphocytes. Down-regulates as well the function of host natural killer cells. Counteracts the antiviral effect of host BST2/tetherin that restricts release of progeny virions from infected cells. However, cooperates with VP40 and host BST2 to activate canonical NF-kappa-B pathway in a manner dependent on neddylation. Functions as a decoy for anti-GP1,2 antibodies thereby contributing to viral immune evasion. Interacts and activates host macrophages and dendritic cells inducing up-regulation of cytokine transcription. This effect is mediated throught activation of host TLR4. In terms of biological role, responsible for binding to the receptor(s) on target cells. Interacts with CD209/DC-SIGN and CLEC4M/DC-SIGNR which act as cofactors for virus entry into dendritic cells (DCs) and endothelial cells. Binding to the macrophage specific lectin CLEC10A also seems to enhance virus infectivity. Interaction with FOLR1/folate receptor alpha may be a cofactor for virus entry in some cell types, although results are contradictory. Members of the Tyro3 receptor tyrosine kinase family also seem to be cell entry factors in filovirus infection. Once attached, the virions are internalized through clathrin-dependent endocytosis and/or macropinocytosis. After internalization of the virus into the endosomes of the host cell, proteolysis of GP1 by two cysteine proteases, CTSB/cathepsin B and CTSL/cathepsin L removes the glycan cap and allows GP1 binding to the host entry receptor NPC1. NPC1-binding, Ca(2+) and acidic pH induce a conformational change of GP2, which unmasks its fusion peptide and permit membranes fusion. Its function is as follows. Acts as a class I viral fusion protein. Under the current model, the protein has at least 3 conformational states: pre-fusion native state, pre-hairpin intermediate state, and post-fusion hairpin state. During viral and target cell membrane fusion, the coiled coil regions (heptad repeats) assume a trimer-of-hairpins structure, positioning the fusion peptide in close proximity to the C-terminal region of the ectodomain. The formation of this structure appears to drive apposition and subsequent fusion of viral and target cell membranes. Responsible for penetration of the virus into the cell cytoplasm by mediating the fusion of the membrane of the endocytosed virus particle with the endosomal membrane. Low pH in endosomes induces an irreversible conformational change in GP2, releasing the fusion hydrophobic peptide. This Homo sapiens (Human) protein is Envelope glycoprotein (GP).